A 314-amino-acid polypeptide reads, in one-letter code: Homoserine O-succinyltransferase (314 aa).

The active-site Acyl-thioester intermediate is Cys-142. The substrate site is built by Lys-163 and Ser-192. Catalysis depends on His-235, which acts as the Proton acceptor. Glu-237 is an active-site residue. Substrate is bound at residue Arg-249.

This sequence belongs to the MetA family.

The protein localises to the cytoplasm. It carries out the reaction L-homoserine + succinyl-CoA = O-succinyl-L-homoserine + CoA. Its pathway is amino-acid biosynthesis; L-methionine biosynthesis via de novo pathway; O-succinyl-L-homoserine from L-homoserine: step 1/1. Its function is as follows. Transfers a succinyl group from succinyl-CoA to L-homoserine, forming succinyl-L-homoserine. This is Homoserine O-succinyltransferase from Shewanella pealeana (strain ATCC 700345 / ANG-SQ1).